A 250-amino-acid polypeptide reads, in one-letter code: Shieldin complex subunit 3 (250 aa).

Positions 28–83 (QDFPTRPLSRFIPWFPYDGSKLPLRPKRSPPVISEEAAEDVKQYLTISEHDAKSHS) are sufficient for interaction with MAD2L2. Polar residues predominate over residues 108–119 (LKEQTNSGNLGK). The tract at residues 108–129 (LKEQTNSGNLGKQSEKGKQHKR) is disordered.

As to quaternary structure, component of the shieldin complex, consisting of SHLD1, SHLD2, SHLD3 and MAD2L2/REV7. Within the complex, SHLD2 forms a scaffold which interacts with a SHLD3-MAD2L2 subcomplex via its N-terminus, and with SHLD1 via its C-terminus. Interacts with ASTE1.

It is found in the chromosome. In terms of biological role, component of the shieldin complex, which plays an important role in repair of DNA double-stranded breaks (DSBs). During G1 and S phase of the cell cycle, the complex functions downstream of TP53BP1 to promote non-homologous end joining (NHEJ) and suppress DNA end resection. Mediates various NHEJ-dependent processes including immunoglobulin class-switch recombination, and fusion of unprotected telomeres. The sequence is that of Shieldin complex subunit 3 from Homo sapiens (Human).